Consider the following 867-residue polypeptide: Mitochondrial escape protein 2 (867 aa).

2 disordered regions span residues 1–20 (MISA…RGPR) and 44–66 (RTTR…KESG). A mitochondrion-targeting transit peptide spans 1–41 (MISAHILSRQATRPGHRGPRFTTHSTALLVQRSLGQGLPLA). Residues 42–308 (HRRTTRAWES…IWAWFTSHPR (267 aa)) are Mitochondrial matrix-facing. A compositionally biased stretch (low complexity) spans 48-59 (AWESTSSSTAST). The RRM domain maps to 203 to 293 (SRIRVEFVAA…TKLRLSYEQR (91 aa)). Residues 309–329 (IVIPLVAALIAAFTVAVFDPI) form a helical membrane-spanning segment. Residues 330 to 867 (REFFVKAHVQ…GVVKGQMVKG (538 aa)) lie on the Mitochondrial intermembrane side of the membrane. The span at 614 to 639 (FAHDGQQKDSESGDQDNDNKNQKKDS) shows a compositional bias: basic and acidic residues. The tract at residues 614–647 (FAHDGQQKDSESGDQDNDNKNQKKDSNTPAPLDP) is disordered. A coiled-coil region spans residues 797 to 857 (LLVLTELAKM…ARLKGLEKEM (61 aa)).

This sequence belongs to the YME2 family.

It localises to the mitochondrion inner membrane. Functionally, plays a role in maintaining the mitochondrial genome and in controlling the mtDNA escape. Involved in the regulation of mtDNA nucleotide structure and number. May have a dispensable role in early maturation of pre-rRNA. In Neurospora crassa (strain ATCC 24698 / 74-OR23-1A / CBS 708.71 / DSM 1257 / FGSC 987), this protein is Mitochondrial escape protein 2 (msp-45).